A 224-amino-acid polypeptide reads, in one-letter code: Cysteine S-methyltransferase NleE (224 aa).

The segment at 49–52 (GITR) is interaction with host proteins TAB2, TAB3 and ZRANB3. 6 residues coordinate S-adenosyl-L-methionine: Ala92, Ser98, Arg107, Gln111, Tyr204, and Glu208.

The protein belongs to the NleE/OspZ family. Monomer.

The protein localises to the secreted. It is found in the host nucleus. It catalyses the reaction L-cysteinyl-[protein] + S-adenosyl-L-methionine = S-methyl-L-cysteinyl-[protein] + S-adenosyl-L-homocysteine + H(+). Its function is as follows. Cysteine methyltransferase effector that inhibits host cell NF-kappa-B activation by preventing nuclear translocation of host protein RELA/p65. Acts by mediating cysteine methylation of host proteins TAB2 and TAB3: methylation of a conserved cysteine residue of the RanBP2-type zinc finger (NZF) of TAB2 and TAB3 disrupts zinc-binding, thereby inactivating the ubiquitin chain-binding activity of TAB2 and TAB3, leading to NF-kappa-B inactivation. Also mediates cysteine methylation of host protein ZRANB3, inactivating its ability to bind ubiquitin chains. The protein is Cysteine S-methyltransferase NleE of Escherichia coli O157:H7.